Reading from the N-terminus, the 462-residue chain is Indoleacetamide hydrolase (462 aa).

Residues Lys-74 and Ser-149 each act as charge relay system in the active site. Ser-173 serves as the catalytic Acyl-ester intermediate.

This sequence belongs to the amidase family.

Its pathway is plant hormone metabolism; auxin biosynthesis. In terms of biological role, hydrolyzes indole-3-acetamide (IAM) into indole-3-acetic acid (IAA). The polypeptide is Indoleacetamide hydrolase (iaaH) (Allorhizobium ampelinum (strain ATCC BAA-846 / DSM 112012 / S4) (Agrobacterium vitis (strain S4))).